Reading from the N-terminus, the 1131-residue chain is cGMP-specific 3',5'-cyclic phosphodiesterase (1131 aa).

Disordered stretches follow at residues 1-26 (MTDVSSPAGGAASPVEMATSSSSAAT) and 42-150 (GVAP…SQQD). Residues 42–63 (GVAPGAVPGPGSAAIPASSSSG) are compositionally biased toward low complexity. Residues 75 to 86 (SNNNRPAATNRS) show a composition bias toward polar residues. Over residues 110–136 (SSSTPSQSPSPSQSPSQASIQTQTSQQ) the composition is skewed to low complexity. GAF domains lie at 255–412 (DIDV…GIGI) and 444–625 (NLEC…GLGI). Residues 655–978 (SQDQTEKLTQ…RNWQDLAEKV (324 aa)) form the PDEase domain. Histidine 731 serves as the catalytic Proton donor. Positions 735, 771, 772, and 882 each coordinate a divalent metal cation. Disordered regions lie at residues 1019–1048 (QQSQHGSEDSHTPEHQRSGSRLSMKKTGAL) and 1078–1131 (SHVS…CALL). Basic and acidic residues-rich tracts occupy residues 1024–1035 (GSEDSHTPEHQR) and 1078–1088 (SHVSEDMDDKS). Low complexity predominate over residues 1097–1117 (ASGSMGRMSASSSTSSAGGQM). A compositionally biased stretch (basic residues) spans 1121-1131 (SKKRSKLCALL). A Cysteine methyl ester modification is found at cysteine 1128. The S-farnesyl cysteine moiety is linked to residue cysteine 1128. Positions 1129–1131 (ALL) are cleaved as a propeptide — removed in mature form.

It belongs to the cyclic nucleotide phosphodiesterase family. As to quaternary structure, interacts with PrBP. The cofactor is a divalent metal cation.

The protein resides in the cell membrane. The catalysed reaction is 3',5'-cyclic GMP + H2O = GMP + H(+). Functionally, has a role regulating cGMP transport in Malpighian tubule principal cells. The sequence is that of cGMP-specific 3',5'-cyclic phosphodiesterase from Drosophila erecta (Fruit fly).